A 356-amino-acid polypeptide reads, in one-letter code: Serpentine receptor class epsilon-29 (356 aa).

Helical transmembrane passes span 29–49, 61–81, 119–139, 161–181, 190–210, 251–271, and 281–301; these read IVEL…IYII, ILAI…LITI, LLIF…FGVL, LFIP…TSLA, FLAQ…YFFV, LVFV…ALFY, and FVEN…IFSV.

The protein belongs to the nematode receptor-like protein sre family.

The protein resides in the membrane. This chain is Serpentine receptor class epsilon-29 (sre-29), found in Caenorhabditis elegans.